The following is a 200-amino-acid chain: Glycerol-3-phosphate acyltransferase (200 aa).

5 helical membrane-spanning segments follow: residues 2–22 (FNIP…AVIV), 51–71 (KAAA…VLLA), 84–104 (AIAA…FFGF), 114–134 (LGVL…IWLV), and 158–178 (LFFM…ILVL).

Belongs to the PlsY family. In terms of assembly, probably interacts with PlsX.

The protein localises to the cell inner membrane. The enzyme catalyses an acyl phosphate + sn-glycerol 3-phosphate = a 1-acyl-sn-glycero-3-phosphate + phosphate. The protein operates within lipid metabolism; phospholipid metabolism. In terms of biological role, catalyzes the transfer of an acyl group from acyl-phosphate (acyl-PO(4)) to glycerol-3-phosphate (G3P) to form lysophosphatidic acid (LPA). This enzyme utilizes acyl-phosphate as fatty acyl donor, but not acyl-CoA or acyl-ACP. This Neisseria meningitidis serogroup A / serotype 4A (strain DSM 15465 / Z2491) protein is Glycerol-3-phosphate acyltransferase.